Here is a 401-residue protein sequence, read N- to C-terminus: 1-deoxy-D-xylulose 5-phosphate reductoisomerase (401 aa).

Residues T11, G12, S13, I14, R38, N39, and N125 each coordinate NADPH. K126 lines the 1-deoxy-D-xylulose 5-phosphate pocket. E127 provides a ligand contact to NADPH. A Mn(2+)-binding site is contributed by D151. 1-deoxy-D-xylulose 5-phosphate contacts are provided by S152, E153, S179, and H202. E153 contributes to the Mn(2+) binding site. Residue G208 participates in NADPH binding. 4 residues coordinate 1-deoxy-D-xylulose 5-phosphate: S215, N220, K221, and E224. Mn(2+) is bound at residue E224.

It belongs to the DXR family. The cofactor is Mg(2+). Mn(2+) serves as cofactor.

It carries out the reaction 2-C-methyl-D-erythritol 4-phosphate + NADP(+) = 1-deoxy-D-xylulose 5-phosphate + NADPH + H(+). The protein operates within isoprenoid biosynthesis; isopentenyl diphosphate biosynthesis via DXP pathway; isopentenyl diphosphate from 1-deoxy-D-xylulose 5-phosphate: step 1/6. Functionally, catalyzes the NADPH-dependent rearrangement and reduction of 1-deoxy-D-xylulose-5-phosphate (DXP) to 2-C-methyl-D-erythritol 4-phosphate (MEP). The sequence is that of 1-deoxy-D-xylulose 5-phosphate reductoisomerase from Paraburkholderia xenovorans (strain LB400).